Here is a 178-residue protein sequence, read N- to C-terminus: dCTP deaminase (178 aa).

DCTP-binding positions include 99 to 104 (RSTWAR) and aspartate 115. The active-site Proton donor/acceptor is the glutamate 125. Positions 157 and 164 each coordinate dCTP.

It belongs to the dCTP deaminase family. As to quaternary structure, homotrimer.

The enzyme catalyses dCTP + H2O + H(+) = dUTP + NH4(+). Its pathway is pyrimidine metabolism; dUMP biosynthesis; dUMP from dCTP (dUTP route): step 1/2. In terms of biological role, catalyzes the deamination of dCTP to dUTP. The sequence is that of dCTP deaminase from Aeropyrum pernix (strain ATCC 700893 / DSM 11879 / JCM 9820 / NBRC 100138 / K1).